Here is a 1022-residue protein sequence, read N- to C-terminus: Sodium-dependent transporter snf-12 (1022 aa).

Topologically, residues 1–165 (MNGEWKSALR…RRELWRTQKD (165 aa)) are cytoplasmic. A helical membrane pass occupies residues 166–185 (FFLSCLGFMVGVGHTMRFPA). The Extracellular segment spans residues 186-192 (KVYQHGG). The helical transmembrane segment at 193 to 213 (GVFFIPYLFSLIFFGLPLVFL) threads the bilayer. Topologically, residues 214–241 (HLSLGQYTGQAANTAFQRLMPIGSGVGW) are cytoplasmic. A helical membrane pass occupies residues 242 to 262 (ALVVIAIPVAVYYNIIVAWAI). At 263–337 (HYFFQSAKGL…DFALGPLQSH (75 aa)) the chain is on the extracellular side. A helical membrane pass occupies residues 338–358 (LVLSLAAAWLLVFFGVFKGLG). Ser-359 is a topological domain (cytoplasmic). A helical membrane pass occupies residues 360–380 (IAQTMNVTATVPYLLLSILLL). The Extracellular segment spans residues 381–412 (RGISLPGANKGLTFLFTVDSTKLWKWQIWKSA). A helical membrane pass occupies residues 413–433 (AEQVFYELGIDAGPLISMAAF). At 434-444 (SRYRNNIYRDS) the chain is on the cytoplasmic side. Residues 445-465 (VLLVIMDALTSCLSGMVIFSF) traverse the membrane as a helical segment. Over 466–498 (VGFIASESNSNVNDVLKHDPLYLSFTVYPGVTS) the chain is Extracellular. A helical membrane pass occupies residues 499–519 (FMYWGGLWATLFFGMLVLAAI). Residues 520-550 (DAEFAWLEMIASAFMNHFSMKNKAVENRLLA) are Cytoplasmic-facing. The chain crosses the membrane as a helical span at residues 551-571 (FLCLAGFFLGLPLCAQGGIFV). Residues 572-584 (FHAIENLNANWNS) are Extracellular-facing. The chain crosses the membrane as a helical span at residues 585-605 (FSLALLSVAIVCYVYGIDNYL). Over 606 to 641 (TDISAMLRVPRIQISKATRLKEKLIYFFGPGGIYIK) the chain is Cytoplasmic. The helical transmembrane segment at 642–662 (FSLCFICPVILTVLLVASVLG) threads the bilayer. The Extracellular portion of the chain corresponds to 663–677 (YQRISFAGRPIPIDY). Residues 678 to 698 (EIVAWIVMIGPLLVVPLVAFM) form a helical membrane-spanning segment. Topologically, residues 699–1022 (QIRQIRNEGK…RPKPIDMPPK (324 aa)) are cytoplasmic. Disordered stretches follow at residues 867–948 (RIPN…SSDD) and 995–1022 (IYDQEQKNGRSKVLSQLKRPKPIDMPPK). Over residues 893-907 (SDPPVPTSPLPPPPK) the composition is skewed to pro residues. A compositionally biased stretch (low complexity) spans 933 to 943 (DDSPSISNSSD).

It belongs to the sodium:neurotransmitter symporter (SNF) (TC 2.A.22) family. In terms of assembly, may interact with STAT family transcription factor sta-2; the interaction is probably direct.

The protein localises to the membrane. The protein resides in the cytoplasm. It is found in the vesicle. Probably mediates sodium-dependent uptake of unknown small molecule(s). By positively modulating expression, in the epidermis, of antimicrobial peptides such as nlp-29, plays a role in resistance to fungal infection and in the response to physical wounding and phorbol ester PMA treatment. Role in response to wounding of the epidermis may be facilitated by recruitment of snf-12 to the wound site by microtubule-dependent vesicle trafficking. Functions cell autonomously in the epidermis, in concert with STAT transcription factor sta-2, probably acting at vesicular membranes, downstream of a p38 MAPK/pmk-1 pathway. The polypeptide is Sodium-dependent transporter snf-12 (Caenorhabditis elegans).